Here is a 346-residue protein sequence, read N- to C-terminus: Protein RecA (346 aa).

Residue 67 to 74 (GPESSGKT) coordinates ATP.

This sequence belongs to the RecA family.

The protein localises to the cytoplasm. Functionally, can catalyze the hydrolysis of ATP in the presence of single-stranded DNA, the ATP-dependent uptake of single-stranded DNA by duplex DNA, and the ATP-dependent hybridization of homologous single-stranded DNAs. It interacts with LexA causing its activation and leading to its autocatalytic cleavage. The protein is Protein RecA of Mycobacterium marinum (strain ATCC BAA-535 / M).